We begin with the raw amino-acid sequence, 780 residues long: Striatin (780 aa).

A coiled-coil region spans residues 53–120; the sequence is LHFLQHEWAR…QERAKYHKLK (68 aa). Residues 55 to 63 are caveolin-binding; it reads FLQHEWARF. Residues 124 to 150 are disordered; it reads ELNQGDMKPPSYDSDEGNETEVQPQQN. The residue at position 137 (Ser137) is a Phosphoserine. A calmodulin-binding region spans residues 149–166; that stretch reads QNSQLMWKQGRQLLRQYL. Position 225 is a phosphothreonine (Thr225). Phosphoserine occurs at positions 227, 229, 245, and 259. Disordered stretches follow at residues 289–310 and 365–387; these read DFLV…GTDW and DELP…RLPE. Residues 299 to 310 are compositionally biased toward basic and acidic residues; that stretch reads NESRSAGDGTDW. WD repeat units lie at residues 461 to 500, 514 to 553, 567 to 606, 662 to 701, 704 to 743, and 750 to 780; these read SHFD…PAKK, AHKG…IDPY, GHTD…PALS, NSSC…LIHS, AHLE…CIQE, and KFEE…KVFV.

It belongs to the WD repeat striatin family. Part of the core of STRIPAK complexes composed of PP2A catalytic and scaffolding subunits, the striatins (PP2A regulatory subunits), the striatin-associated proteins MOB4, STRIP1 and STRIP2, PDCD10 and members of the STE20 kinases, such as STK24 and STK26. Interacts with CTTNBP2; this interaction may regulate dendritic spine distribution of STRN. Activation of glutamate receptors weakens the interaction with CTTNBP2. In terms of tissue distribution, preferentially expressed in brain.

It is found in the cytoplasm. The protein localises to the membrane. Its subcellular location is the cell projection. It localises to the dendritic spine. In terms of biological role, calmodulin-binding scaffolding protein which is the center of the striatin-interacting phosphatase and kinase (STRIPAK) complexes. STRIPAK complexes have critical roles in protein (de)phosphorylation and are regulators of multiple signaling pathways including Hippo, MAPK, nuclear receptor and cytoskeleton remodeling. Different types of STRIPAK complexes are involved in a variety of biological processes such as cell growth, differentiation, apoptosis, metabolism and immune regulation. This Homo sapiens (Human) protein is Striatin (STRN).